The chain runs to 200 residues: V-set and transmembrane domain-containing protein 5 (200 aa).

An N-terminal signal peptide occupies residues 1-28; sequence MRPLPSGRRKTRGISLGLFALCLAAARC. Topologically, residues 29–147 are extracellular; it reads LQSQGVSLYI…VSEILYEDLH (119 aa). The Ig-like C2-type domain maps to 37–139; sequence YIPQATINAT…QFGTIVLHVS (103 aa). N102 is a glycosylation site (N-linked (GlcNAc...) asparagine). Residues 148-168 traverse the membrane as a helical segment; the sequence is FVAVILAFLAAVAAVLISLMW. Topologically, residues 169-200 are cytoplasmic; it reads VCNKCAYKFQRKRRHKLKESTTEEIELEDVEC. The segment at 170-186 is important for CDC42-dependent filopodia induction; it reads CNKCAYKFQRKRRHKLK.

As to quaternary structure, can homooligomerize through cis interactions within the same cell membrane. Post-translationally, N-glycosylated.

It localises to the cell membrane. Its subcellular location is the cell projection. It is found in the dendrite. The protein resides in the axon. Cell adhesion-like membrane protein of the central nervous system (CNS) which modulates both the position and complexity of central neurons by altering their membrane morphology and dynamics. Involved in the formation of neuronal dendrites and protrusions including dendritic filopodia. In synaptogenesis, regulates synapse formation by altering dendritic spine morphology and actin distribution. Promotes formation of unstable neuronal spines such as thin and branched types. Regulates neuronal morphogenesis and migration during cortical development in the brain. This chain is V-set and transmembrane domain-containing protein 5 (VSTM5), found in Homo sapiens (Human).